Here is a 1775-residue protein sequence, read N- to C-terminus: Atrochrysone carboxylic acid synthase (1775 aa).

Positions 29 to 258 are N-terminal acylcarrier protein transacylase domain (SAT); the sequence is RSQSKTESGW…QLPVYGGLCH (230 aa). The Ketosynthase family 3 (KS3) domain occupies 391-821; that stretch reads DSSIAIVGMA…GGNTSLLIEE (431 aa). Catalysis depends on for beta-ketoacyl synthase activity residues Cys-564, His-699, and His-740. Residues 921-1241 form a malonyl-CoA:ACP transacylase (MAT) domain region; the sequence is FVFSGQGSFY…MAQLHNLGVD (321 aa). The interval 1305–1626 is product template (PT) domain; the sequence is TSLVHRLVCE…RSLINTFFSP (322 aa). The tract at residues 1309 to 1455 is N-terminal hotdog fold; sequence HRLVCESVQE…WLEEWSPMTH (147 aa). Positions 1309-1621 constitute a PKS/mFAS DH domain; that stretch reads HRLVCESVQE…FRTFPRSLIN (313 aa). Catalysis depends on His-1341, which acts as the Proton acceptor; for dehydratase activity. The tract at residues 1472–1621 is C-terminal hotdog fold; sequence TANRLSRDMV…FRTFPRSLIN (150 aa). Catalysis depends on Asp-1532, which acts as the Proton donor; for dehydratase activity. The tract at residues 1672 to 1694 is disordered; that stretch reads SRTVMDSSDSSPATTLTPPTLPS. Positions 1677–1689 are enriched in low complexity; that stretch reads DSSDSSPATTLTP. The region spanning 1698–1775 is the Carrier domain; sequence STESPIVHRA…DLKAWLIDYC (78 aa). Position 1735 is an O-(pantetheine 4'-phosphoryl)serine (Ser-1735).

Endocrocin is specifically produced in conidia.

The catalysed reaction is holo-[ACP] + 8 malonyl-CoA + 8 H(+) = atrochrysone carboxyl-[ACP] + 8 CO2 + 8 CoA + 2 H2O. The protein operates within secondary metabolite biosynthesis. Non-reducing polyketide synthase; part of the gene cluster that mediates the biosynthesis of endocrocin, a simple anthraquinone interesting for many biotechnological applications. The pathway begins with the synthesis of atrochrysone thioester by the polyketide synthase (PKS) encA. The atrochrysone carboxyl ACP thioesterase encB then breaks the thioester bond and releases the atrochrysone carboxylic acid from encA. The atrochrysone carboxylic acid is then converted to endocrocin anthrone which is further oxidized into endocrocin by the anthrone oxygenase encC. The exact function of encD has not been identified yet, but it negatively regulates endocrocin production, likely through the modification of endocrocin itself. The protein is Atrochrysone carboxylic acid synthase of Aspergillus fumigatus (strain ATCC MYA-4609 / CBS 101355 / FGSC A1100 / Af293) (Neosartorya fumigata).